The following is a 710-amino-acid chain: Chaperonin-containing T-complex member BBS12 (710 aa).

This sequence belongs to the TCP-1 chaperonin family. BBS12 subfamily. Component of the chaperonin-containing T-complex (TRiC), a heterooligomeric complex of about 850 to 900 kDa that forms two stacked rings, 12 to 16 nm in diameter. Interacts with MKKS.

Its subcellular location is the cell projection. It localises to the cilium. In terms of biological role, component of the chaperonin-containing T-complex (TRiC), a molecular chaperone complex that assists the folding of proteins upon ATP hydrolysis. As part of the TRiC complex may play a role in the assembly of BBSome, a complex involved in ciliogenesis regulating transports vesicles to the cilia. Involved in adipogenic differentiation. The polypeptide is Chaperonin-containing T-complex member BBS12 (BBS12) (Pongo abelii (Sumatran orangutan)).